A 245-amino-acid polypeptide reads, in one-letter code: Endonuclease III (245 aa).

A HhH domain is found at 119–138 (MDKLVTLPGVGRKTANVILG). The [4Fe-4S] cluster site is built by cysteine 198, cysteine 205, cysteine 208, and cysteine 214.

It belongs to the Nth/MutY family. It depends on [4Fe-4S] cluster as a cofactor.

The enzyme catalyses 2'-deoxyribonucleotide-(2'-deoxyribose 5'-phosphate)-2'-deoxyribonucleotide-DNA = a 3'-end 2'-deoxyribonucleotide-(2,3-dehydro-2,3-deoxyribose 5'-phosphate)-DNA + a 5'-end 5'-phospho-2'-deoxyribonucleoside-DNA + H(+). In terms of biological role, DNA repair enzyme that has both DNA N-glycosylase activity and AP-lyase activity. The DNA N-glycosylase activity releases various damaged pyrimidines from DNA by cleaving the N-glycosidic bond, leaving an AP (apurinic/apyrimidinic) site. The AP-lyase activity cleaves the phosphodiester bond 3' to the AP site by a beta-elimination, leaving a 3'-terminal unsaturated sugar and a product with a terminal 5'-phosphate. Has a preference for oxidized pyrimidines, such as thymine glycol (prefers 5S isomers) 5,6-dihydrouracil:G, 5-hydroxyuracil:G, 5-hydroxycytosine:G and urea:A. Cleaves ssDNA containing an AP site. This is Endonuclease III from Mycobacterium tuberculosis (strain ATCC 25618 / H37Rv).